Reading from the N-terminus, the 412-residue chain is Early growth response protein 2b (412 aa).

The segment at 269–299 is disordered; sequence YTPQNLPLRPILRPRKYPNRPSKTPVHERPY. 3 C2H2-type zinc fingers span residues 299 to 323, 329 to 351, and 357 to 379; these read YPCPAEGCDRRFSRSDELTRHIRIH, FQCRICMRNFSRSDHLTTHIRTH, and FACDFCGRKFARSDERKRHTKIH. The tract at residues 371–412 is disordered; the sequence is ERKRHTKIHLRQKERKSSSSSTGVSSSERGVATSICSSSSNQ. Basic residues predominate over residues 374–384; the sequence is RHTKIHLRQKE. Low complexity predominate over residues 388 to 401; that stretch reads SSSSTGVSSSERGV.

This sequence belongs to the EGR C2H2-type zinc-finger protein family.

The protein resides in the nucleus. Functionally, sequence-specific DNA-binding transcription factor. Binds to two specific DNA sites located in the promoter region of HOXA4. In Danio rerio (Zebrafish), this protein is Early growth response protein 2b (egr2b).